The following is a 446-amino-acid chain: MPKQKAAKKDHYQYSDLSSIKKEGEEDQYHFYGVVIDASFPYKGEKRYVVTCKVADPSSVAKGGKLNTVNVVFFSQNFEDLPIIQRVGDIVRVHRARLQHYNDAKQLNVNMYYRSSWCLFIGNDKEAPLEPKVENEDGTNNYFSYTPYNFSGKSFTQEGHETKILKDLKKWSKDYFSNNDVVEQVKKADIETAMKNKTDFDLLAKVTEISDNDQYTNTVSLNDSTGQTWTGHLFKRKFPHLVKGDVLRIKSVSAKEDNSLIFSSHSNILKFFSFSSIHKKLKSSISSDTHIKTCVTKIDKAAHNKMDITPLKKLFFNPKKSEKLFRSQFSVLKVDTKNLEDYVGAFDGKKWHSYKGKKTPKDAELRWNIKLIVTDYKNQQDDKAYMIHLDDNSFFKGINPANWSNAATKKKAEKAFSVLTNNKVNYVDAILERDKKNYHIRHTQFK.

It belongs to the telombin family. As to quaternary structure, monomer.

Its subcellular location is the nucleus. It is found in the chromosome. The protein resides in the telomere. Functionally, may function as protective capping of the single-stranded telomeric overhang. May also participate in telomere length regulation during DNA replication. Binds specifically to the T4G4-containing extension on the 3'strand and protects this region of the telomere from nuclease digestion and chemical modification. This is Telomere-binding protein 51 kDa subunit from Euplotes crassus.